Reading from the N-terminus, the 698-residue chain is Methionine--tRNA ligase (698 aa).

The 'HIGH' region signature appears at 18 to 28 (PYANGDLHVGH). 4 residues coordinate Zn(2+): cysteine 149, cysteine 152, cysteine 161, and cysteine 165. An ATP-binding site is contributed by threonine 350. Residues 567–590 (EAADAGDEEGEDEDEEPPAADLEP) form a disordered region. The span at 570–584 (DAGDEEGEDEDEEPP) shows a compositional bias: acidic residues. Positions 600 to 698 (DFQDLDIRVA…EDAEPGTKVQ (99 aa)) constitute a tRNA-binding domain.

This sequence belongs to the class-I aminoacyl-tRNA synthetase family. MetG type 1 subfamily. Homodimer. It depends on Zn(2+) as a cofactor.

The protein resides in the cytoplasm. The enzyme catalyses tRNA(Met) + L-methionine + ATP = L-methionyl-tRNA(Met) + AMP + diphosphate. Is required not only for elongation of protein synthesis but also for the initiation of all mRNA translation through initiator tRNA(fMet) aminoacylation. The protein is Methionine--tRNA ligase of Natronomonas pharaonis (strain ATCC 35678 / DSM 2160 / CIP 103997 / JCM 8858 / NBRC 14720 / NCIMB 2260 / Gabara) (Halobacterium pharaonis).